We begin with the raw amino-acid sequence, 377 residues long: Succinyl-diaminopimelate desuccinylase (377 aa).

His66 contributes to the Zn(2+) binding site. Residue Asp68 is part of the active site. A Zn(2+)-binding site is contributed by Asp99. Glu133 acts as the Proton acceptor in catalysis. Residues Glu134, Glu162, and His348 each coordinate Zn(2+).

It belongs to the peptidase M20A family. DapE subfamily. Homodimer. It depends on Zn(2+) as a cofactor. Co(2+) serves as cofactor.

The enzyme catalyses N-succinyl-(2S,6S)-2,6-diaminopimelate + H2O = (2S,6S)-2,6-diaminopimelate + succinate. The protein operates within amino-acid biosynthesis; L-lysine biosynthesis via DAP pathway; LL-2,6-diaminopimelate from (S)-tetrahydrodipicolinate (succinylase route): step 3/3. In terms of biological role, catalyzes the hydrolysis of N-succinyl-L,L-diaminopimelic acid (SDAP), forming succinate and LL-2,6-diaminopimelate (DAP), an intermediate involved in the bacterial biosynthesis of lysine and meso-diaminopimelic acid, an essential component of bacterial cell walls. This Methylococcus capsulatus (strain ATCC 33009 / NCIMB 11132 / Bath) protein is Succinyl-diaminopimelate desuccinylase.